A 124-amino-acid polypeptide reads, in one-letter code: Small ribosomal subunit protein uS12 (124 aa).

At aspartate 89 the chain carries 3-methylthioaspartic acid. The disordered stretch occupies residues 105-124 (QGVKNRKQARSKYGAKMEKK).

It belongs to the universal ribosomal protein uS12 family. As to quaternary structure, part of the 30S ribosomal subunit. Contacts proteins S8 and S17. May interact with IF1 in the 30S initiation complex.

Its function is as follows. With S4 and S5 plays an important role in translational accuracy. Interacts with and stabilizes bases of the 16S rRNA that are involved in tRNA selection in the A site and with the mRNA backbone. Located at the interface of the 30S and 50S subunits, it traverses the body of the 30S subunit contacting proteins on the other side and probably holding the rRNA structure together. The combined cluster of proteins S8, S12 and S17 appears to hold together the shoulder and platform of the 30S subunit. The sequence is that of Small ribosomal subunit protein uS12 from Renibacterium salmoninarum (strain ATCC 33209 / DSM 20767 / JCM 11484 / NBRC 15589 / NCIMB 2235).